The chain runs to 543 residues: CTP synthase (543 aa).

The amidoligase domain stretch occupies residues Met-1 to Leu-265. Residue Ser-13 coordinates CTP. Position 13 (Ser-13) interacts with UTP. ATP-binding positions include Ser-14–Ile-19 and Asp-71. Positions 71 and 139 each coordinate Mg(2+). Residues Asp-146 to Glu-148, Lys-186 to Gln-191, and Lys-222 contribute to the CTP site. UTP-binding positions include Lys-186–Gln-191 and Lys-222. The 252-residue stretch at Thr-290 to Lys-541 folds into the Glutamine amidotransferase type-1 domain. An L-glutamine-binding site is contributed by Gly-351. The active-site Nucleophile; for glutamine hydrolysis is the Cys-378. Residues Leu-379 to Gln-382, Glu-402, and Arg-469 each bind L-glutamine. Catalysis depends on residues His-514 and Glu-516.

This sequence belongs to the CTP synthase family. Homotetramer.

It catalyses the reaction UTP + L-glutamine + ATP + H2O = CTP + L-glutamate + ADP + phosphate + 2 H(+). The enzyme catalyses L-glutamine + H2O = L-glutamate + NH4(+). It carries out the reaction UTP + NH4(+) + ATP = CTP + ADP + phosphate + 2 H(+). It functions in the pathway pyrimidine metabolism; CTP biosynthesis via de novo pathway; CTP from UDP: step 2/2. With respect to regulation, allosterically activated by GTP, when glutamine is the substrate; GTP has no effect on the reaction when ammonia is the substrate. The allosteric effector GTP functions by stabilizing the protein conformation that binds the tetrahedral intermediate(s) formed during glutamine hydrolysis. Inhibited by the product CTP, via allosteric rather than competitive inhibition. Functionally, catalyzes the ATP-dependent amination of UTP to CTP with either L-glutamine or ammonia as the source of nitrogen. Regulates intracellular CTP levels through interactions with the four ribonucleotide triphosphates. The sequence is that of CTP synthase from Pseudomonas savastanoi pv. phaseolicola (strain 1448A / Race 6) (Pseudomonas syringae pv. phaseolicola (strain 1448A / Race 6)).